The sequence spans 285 residues: Probable endonuclease 4 (285 aa).

Zn(2+)-binding residues include H69, H109, E145, D179, H182, H216, D229, H231, and E261.

Belongs to the AP endonuclease 2 family. Requires Zn(2+) as cofactor.

The catalysed reaction is Endonucleolytic cleavage to 5'-phosphooligonucleotide end-products.. Endonuclease IV plays a role in DNA repair. It cleaves phosphodiester bonds at apurinic or apyrimidinic (AP) sites, generating a 3'-hydroxyl group and a 5'-terminal sugar phosphate. The protein is Probable endonuclease 4 of Escherichia fergusonii (strain ATCC 35469 / DSM 13698 / CCUG 18766 / IAM 14443 / JCM 21226 / LMG 7866 / NBRC 102419 / NCTC 12128 / CDC 0568-73).